A 253-amino-acid polypeptide reads, in one-letter code: uncharacterized protein (253 aa).

It belongs to the NAD(P)-dependent epimerase/dehydratase family.

This is an uncharacterized protein from Bacillus subtilis (strain 168).